A 324-amino-acid polypeptide reads, in one-letter code: HTH-type transcriptional regulator CysB (324 aa).

The HTH lysR-type domain occupies 1 to 59 (MKLQQLRYIVEVVNHNLNVSSTAEGLYTSQPGISKQVRMLEDELGIQIFSRSGKHLTQV). The H-T-H motif DNA-binding region spans 19-38 (VSSTAEGLYTSQPGISKQVR).

It belongs to the LysR transcriptional regulatory family. As to quaternary structure, homotetramer.

It is found in the cytoplasm. Its function is as follows. This protein is a positive regulator of gene expression for the cysteine regulon. The inducer for CysB is N-acetylserine. This chain is HTH-type transcriptional regulator CysB (cysB), found in Escherichia coli O157:H7.